The primary structure comprises 472 residues: Uronate isomerase (472 aa).

The protein belongs to the metallo-dependent hydrolases superfamily. Uronate isomerase family.

The catalysed reaction is D-glucuronate = D-fructuronate. The enzyme catalyses aldehydo-D-galacturonate = keto-D-tagaturonate. It functions in the pathway carbohydrate metabolism; pentose and glucuronate interconversion. The polypeptide is Uronate isomerase (Shouchella clausii (strain KSM-K16) (Alkalihalobacillus clausii)).